The following is a 1752-amino-acid chain: Gag-Pol polyprotein (1752 aa).

Residue G2 is the site of N-myristoyl glycine; by host attachment. Residues 154 to 185 adopt a coiled-coil conformation; sequence AAQQQVLLLQREQQREQREKDIKKRDEKKKKL. The segment covering 168–178 has biased composition (basic and acidic residues); sequence REQREKDIKKR. Residues 168-222 form a disordered region; that stretch reads REQREKDIKKRDEKKKKLLPDTTQKVEQTDIGEASSSDASAQKPISTDNNPDLKV. The segment covering 201–217 has biased composition (polar residues); the sequence is ASSSDASAQKPISTDNN. Residues 501-518 form a CCHC-type zinc finger; that stretch reads NTCFFCKQPGHWKADCPN. The 77-residue stretch at 618–694 folds into the Peptidase A2 domain; sequence IPMLVDTGAC…QTFHILGRDT (77 aa). The active-site Protease; shared with dimeric partner is the D623. A Reverse transcriptase domain is found at 793-977; the sequence is ENQGILIKCH…QEVVYLGQLL (185 aa). Positions 861, 928, 929, 1231, 1269, 1290, 1360, 1493, and 1550 each coordinate Mg(2+). The RNase H type-1 domain occupies 1222 to 1368; the sequence is PDPDMTLFSD…ADEAAKNAVF (147 aa). The region spanning 1482–1638 is the Integrase catalytic domain; it reads LPSRPFAHLQ…SPHEIVMGRP (157 aa).

In terms of assembly, homohexamer. Further associates as homomultimer. The virus core is composed of a lattice formed from hexagonal rings, each containing six capsid monomers. The protease is a homodimer, whose active site consists of two apposed aspartic acid residues. The reverse transcriptase is a monomer. It depends on Mg(2+) as a cofactor. In terms of processing, specific enzymatic cleavages by the viral protease yield mature proteins. The protease is released by autocatalytic cleavage. The polyprotein is cleaved during and after budding, this process is termed maturation.

The protein resides in the host cell membrane. The protein localises to the virion. The enzyme catalyses DNA(n) + a 2'-deoxyribonucleoside 5'-triphosphate = DNA(n+1) + diphosphate. It carries out the reaction Endonucleolytic cleavage to 5'-phosphomonoester.. In terms of biological role, targets Gag and gag-pol polyproteins to the plasma membrane via a multipartite membrane binding signal, that includes its myristoylated N-terminus. Also mediates nuclear localization of the pre-integration complex. Functionally, capsid protein p25 forms the spherical core of the virion that encapsulates the genomic RNA-nucleocapsid complex. Involved in the packaging and encapsidation of two copies of the genome. Binds with high affinity to conserved UCUG elements within the packaging signal, located near the 5'-end of the genome. This binding is dependent on genome dimerization. Its function is as follows. Mediates proteolytic cleavages of Gag and Gag-Pol polyproteins during or shortly after the release of the virion from the plasma membrane. Cleavages take place as an ordered, step-wise cascade to yield mature proteins. This process is called maturation. Displays maximal activity during the budding process just prior to particle release from the cell. In terms of biological role, is a multifunctional enzyme that converts the viral dimeric RNA genome into dsDNA in the cytoplasm, shortly after virus entry into the cell. This enzyme displays a DNA polymerase activity that can copy either DNA or RNA templates, and a ribonuclease H (RNase H) activity that cleaves the RNA strand of RNA-DNA heteroduplexes in a partially processive 3' to 5' endonucleasic mode. Conversion of viral genomic RNA into dsDNA requires many steps. A tRNA binds to the primer-binding site (PBS) situated at the 5' end of the viral RNA. RT uses the 3' end of the tRNA primer to perform a short round of RNA-dependent minus-strand DNA synthesis. The reading proceeds through the U5 region and ends after the repeated (R) region which is present at both ends of viral RNA. The portion of the RNA-DNA heteroduplex is digested by the RNase H, resulting in a ssDNA product attached to the tRNA primer. This ssDNA/tRNA hybridizes with the identical R region situated at the 3' end of viral RNA. This template exchange, known as minus-strand DNA strong stop transfer, can be either intra- or intermolecular. RT uses the 3' end of this newly synthesized short ssDNA to perform the RNA-dependent minus-strand DNA synthesis of the whole template. RNase H digests the RNA template except for a polypurine tract (PPT) situated at the 5' end of the genome. It is not clear if both polymerase and RNase H activities are simultaneous. RNase H probably can proceed both in a polymerase-dependent (RNA cut into small fragments by the same RT performing DNA synthesis) and a polymerase-independent mode (cleavage of remaining RNA fragments by free RTs). Secondly, RT performs DNA-directed plus-strand DNA synthesis using the PPT that has not been removed by RNase H as primers. PPT and tRNA primers are then removed by RNase H. The 3' and 5' ssDNA PBS regions hybridize to form a circular dsDNA intermediate. Strand displacement synthesis by RT to the PBS and PPT ends produces a blunt ended, linear dsDNA copy of the viral genome that includes long terminal repeats (LTRs) at both ends. Functionally, catalyzes viral DNA integration into the host chromosome, by performing a series of DNA cutting and joining reactions. This enzyme activity takes place after virion entry into a cell and reverse transcription of the RNA genome in dsDNA. The first step in the integration process is 3' processing. This step requires a complex comprising the viral genome, matrix protein and integrase. This complex is called the pre-integration complex (PIC). The integrase protein removes 2 nucleotides from each 3' end of the viral DNA, leaving recessed CA OH's at the 3' ends. In the second step that requires cell division, the PIC enters cell nucleus. In the third step, termed strand transfer, the integrase protein joins the previously processed 3' ends to the 5' ends of strands of target cellular DNA at the site of integration. The last step is viral DNA integration into host chromosome. Plays a role in budding and is processed by the viral protease during virion maturation outside the cell. The sequence is that of Gag-Pol polyprotein (gag-pol) from Walleye dermal sarcoma virus (WDSV).